We begin with the raw amino-acid sequence, 102 residues long: Protein iss (102 aa).

Its function is as follows. Increases serum survival and confers group II surface exclusion. The chain is Protein iss (iss) from Escherichia coli.